Consider the following 307-residue polypeptide: Nicotinamide/nicotinic acid mononucleotide adenylyltransferase 2 (307 aa).

Positions 16 and 17 each coordinate NAD(+). Position 24 (His24) interacts with ATP. NAD(+) contacts are provided by Trp92 and Thr95. S-palmitoyl cysteine attachment occurs at residues Cys164 and Cys165. 5 residues coordinate NAD(+): Gly200, Asp202, Leu212, Trp213, and Arg232. 271 to 274 (TKSR) serves as a coordination point for ATP.

It belongs to the eukaryotic NMN adenylyltransferase family. In terms of assembly, monomer. It depends on Mg(2+) as a cofactor. Post-translationally, degraded in response to injured neurite. Degradation is caused by polyubiquitination by MYCBP2 after recognition by FBXO45. In terms of processing, palmitoylated; palmitoylation is required for membrane association.

It is found in the golgi apparatus membrane. The protein resides in the cytoplasmic vesicle membrane. Its subcellular location is the cytoplasm. The protein localises to the cell projection. It localises to the axon. It catalyses the reaction beta-nicotinamide D-ribonucleotide + ATP + H(+) = diphosphate + NAD(+). The enzyme catalyses nicotinate beta-D-ribonucleotide + ATP + H(+) = deamido-NAD(+) + diphosphate. It participates in cofactor biosynthesis; NAD(+) biosynthesis; NAD(+) from nicotinamide D-ribonucleotide: step 1/1. It functions in the pathway cofactor biosynthesis; NAD(+) biosynthesis; deamido-NAD(+) from nicotinate D-ribonucleotide: step 1/1. Its activity is regulated as follows. Inhibited by P1-(adenosine-5')-P3-(nicotinamide-riboside-5')-triphosphate (Np3AD) and P1-(adenosine-5')-P4-(nicotinamide-riboside-5')-tetraphosphate (Np4AD). Its function is as follows. Nicotinamide/nicotinate-nucleotide adenylyltransferase that acts as an axon maintenance factor. Axon survival factor required for the maintenance of healthy axons: acts by delaying Wallerian axon degeneration, an evolutionarily conserved process that drives the loss of damaged axons. Catalyzes the formation of NAD(+) from nicotinamide mononucleotide (NMN) and ATP. Can also use the deamidated form; nicotinic acid mononucleotide (NaMN) as substrate but with a lower efficiency. Cannot use triazofurin monophosphate (TrMP) as substrate. Also catalyzes the reverse reaction, i.e. the pyrophosphorolytic cleavage of NAD(+). For the pyrophosphorolytic activity prefers NAD(+), NADH and NaAD as substrates and degrades nicotinic acid adenine dinucleotide phosphate (NHD) less effectively. Fails to cleave phosphorylated dinucleotides NADP(+), NADPH and NaADP(+). Also acts as an activator of ADP-ribosylation by supporting the catalytic activity of PARP16 and promoting mono-ADP-ribosylation of ribosomes by PARP16. May be involved in the maintenance of axonal integrity. The polypeptide is Nicotinamide/nicotinic acid mononucleotide adenylyltransferase 2 (NMNAT2) (Pongo abelii (Sumatran orangutan)).